The sequence spans 154 residues: Large ribosomal subunit protein uL13 (154 aa).

The protein belongs to the universal ribosomal protein uL13 family. As to quaternary structure, part of the 50S ribosomal subunit.

Its function is as follows. This protein is one of the early assembly proteins of the 50S ribosomal subunit, although it is not seen to bind rRNA by itself. It is important during the early stages of 50S assembly. The polypeptide is Large ribosomal subunit protein uL13 (Rhodospirillum centenum (strain ATCC 51521 / SW)).